A 391-amino-acid polypeptide reads, in one-letter code: S-adenosylmethionine synthase (391 aa).

His14 contacts ATP. Mg(2+) is bound at residue Asp16. K(+) is bound at residue Glu42. Residues Glu55 and Gln98 each contribute to the L-methionine site. A flexible loop region spans residues 98–108 (QSVDIAMGVDE). ATP contacts are provided by residues 172-174 (DGK), 238-239 (RF), Asp247, 253-254 (RK), Ala270, and Lys274. An L-methionine-binding site is contributed by Asp247. Lys278 is an L-methionine binding site.

It belongs to the AdoMet synthase family. As to quaternary structure, homotetramer; dimer of dimers. It depends on Mg(2+) as a cofactor. Requires K(+) as cofactor.

Its subcellular location is the cytoplasm. It carries out the reaction L-methionine + ATP + H2O = S-adenosyl-L-methionine + phosphate + diphosphate. It functions in the pathway amino-acid biosynthesis; S-adenosyl-L-methionine biosynthesis; S-adenosyl-L-methionine from L-methionine: step 1/1. Its function is as follows. Catalyzes the formation of S-adenosylmethionine (AdoMet) from methionine and ATP. The overall synthetic reaction is composed of two sequential steps, AdoMet formation and the subsequent tripolyphosphate hydrolysis which occurs prior to release of AdoMet from the enzyme. The chain is S-adenosylmethionine synthase from Clostridium botulinum (strain Langeland / NCTC 10281 / Type F).